A 173-amino-acid polypeptide reads, in one-letter code: Interferon gamma (173 aa).

A signal peptide spans 1-22; that stretch reads MNATHCILALQLCLLAISGCSS. Residue Gln23 is modified to Pyrrolidone carboxylic acid. N-linked (GlcNAc...) asparagine glycosylation is found at Asn38 and Asn105.

Belongs to the type II (or gamma) interferon family. In terms of assembly, homodimer. Interacts with IFNGR1 (via extracellular domain); this interaction promotes IFNGR1 dimerization. As to expression, released primarily from activated T lymphocytes.

It is found in the secreted. In terms of biological role, type II interferon produced by immune cells such as T-cells and NK cells that plays crucial roles in antimicrobial, antiviral, and antitumor responses by activating effector immune cells and enhancing antigen presentation. Primarily signals through the JAK-STAT pathway after interaction with its receptor IFNGR1 to affect gene regulation. Upon IFNG binding, IFNGR1 intracellular domain opens out to allow association of downstream signaling components JAK2, JAK1 and STAT1, leading to STAT1 activation, nuclear translocation and transcription of IFNG-regulated genes. Many of the induced genes are transcription factors such as IRF1 that are able to further drive regulation of a next wave of transcription. Plays a role in class I antigen presentation pathway by inducing a replacement of catalytic proteasome subunits with immunoproteasome subunits. In turn, increases the quantity, quality, and repertoire of peptides for class I MHC loading. Increases the efficiency of peptide generation also by inducing the expression of activator PA28 that associates with the proteasome and alters its proteolytic cleavage preference. Up-regulates as well MHC II complexes on the cell surface by promoting expression of several key molecules such as cathepsins B/CTSB, H/CTSH, and L/CTSL. Participates in the regulation of hematopoietic stem cells during development and under homeostatic conditions by affecting their development, quiescence, and differentiation. This is Interferon gamma (IFNG) from Meriones unguiculatus (Mongolian jird).